The chain runs to 102 residues: Small ribosomal subunit protein uS10 (102 aa).

Belongs to the universal ribosomal protein uS10 family. In terms of assembly, part of the 30S ribosomal subunit.

In terms of biological role, involved in the binding of tRNA to the ribosomes. In Heliobacterium modesticaldum (strain ATCC 51547 / Ice1), this protein is Small ribosomal subunit protein uS10.